A 154-amino-acid chain; its full sequence is Ribosome maturation factor RimP (154 aa).

It belongs to the RimP family.

The protein resides in the cytoplasm. Functionally, required for maturation of 30S ribosomal subunits. The chain is Ribosome maturation factor RimP from Alkaliphilus oremlandii (strain OhILAs) (Clostridium oremlandii (strain OhILAs)).